Consider the following 33-residue polypeptide: Photosystem II reaction center protein Psb30 (33 aa).

Residues 5-25 (VIAQLTVLALIVISGPLVIAL) form a helical membrane-spanning segment.

Belongs to the Psb30/Ycf12 family. As to quaternary structure, PSII is composed of 1 copy each of membrane proteins PsbA, PsbB, PsbC, PsbD, PsbE, PsbF, PsbH, PsbI, PsbJ, PsbK, PsbL, PsbM, PsbT, PsbX, PsbY, PsbZ, Psb30/Ycf12, peripheral proteins of the oxygen-evolving complex and a large number of cofactors. It forms dimeric complexes.

It is found in the plastid. The protein localises to the chloroplast thylakoid membrane. Functionally, a core subunit of photosystem II (PSII), probably helps stabilize the reaction center. This chain is Photosystem II reaction center protein Psb30, found in Huperzia lucidula (Shining clubmoss).